The chain runs to 281 residues: 2-dehydro-3-deoxyphosphooctonate aldolase (281 aa).

Belongs to the KdsA family.

The protein localises to the cytoplasm. It catalyses the reaction D-arabinose 5-phosphate + phosphoenolpyruvate + H2O = 3-deoxy-alpha-D-manno-2-octulosonate-8-phosphate + phosphate. Its pathway is carbohydrate biosynthesis; 3-deoxy-D-manno-octulosonate biosynthesis; 3-deoxy-D-manno-octulosonate from D-ribulose 5-phosphate: step 2/3. It participates in bacterial outer membrane biogenesis; lipopolysaccharide biosynthesis. The chain is 2-dehydro-3-deoxyphosphooctonate aldolase from Pseudomonas aeruginosa (strain UCBPP-PA14).